The following is a 470-amino-acid chain: Argininosuccinate lyase (470 aa).

Belongs to the lyase 1 family. Argininosuccinate lyase subfamily.

It is found in the cytoplasm. It carries out the reaction 2-(N(omega)-L-arginino)succinate = fumarate + L-arginine. The protein operates within amino-acid biosynthesis; L-arginine biosynthesis; L-arginine from L-ornithine and carbamoyl phosphate: step 3/3. This is Argininosuccinate lyase from Mycolicibacterium gilvum (strain PYR-GCK) (Mycobacterium gilvum (strain PYR-GCK)).